A 203-amino-acid chain; its full sequence is Glycerol-3-phosphate acyltransferase (203 aa).

6 helical membrane passes run 3 to 23, 61 to 81, 87 to 107, 118 to 138, 144 to 164, and 172 to 192; these read NLILYAVSYLLGSIPSGLILA, ILTVVCDVLKGVLPLIVASFL, VLWTMAVLSVAGHCFSIFLGF, GVLAFFLPVEIIIALVVWFLV, ISSLASLCALIALIASSFIIH, and THAPILIIAFLVVYKHIPNIV.

The protein belongs to the PlsY family. As to quaternary structure, probably interacts with PlsX.

The protein localises to the cell inner membrane. It catalyses the reaction an acyl phosphate + sn-glycerol 3-phosphate = a 1-acyl-sn-glycero-3-phosphate + phosphate. Its pathway is lipid metabolism; phospholipid metabolism. In terms of biological role, catalyzes the transfer of an acyl group from acyl-phosphate (acyl-PO(4)) to glycerol-3-phosphate (G3P) to form lysophosphatidic acid (LPA). This enzyme utilizes acyl-phosphate as fatty acyl donor, but not acyl-CoA or acyl-ACP. The sequence is that of Glycerol-3-phosphate acyltransferase from Campylobacter concisus (strain 13826).